The chain runs to 698 residues: Polyribonucleotide nucleotidyltransferase (698 aa).

Residues Asp-485 and Asp-491 each coordinate Mg(2+). Positions Pro-552–Ile-611 constitute a KH domain. The region spanning Gly-621 to Lys-689 is the S1 motif domain.

It belongs to the polyribonucleotide nucleotidyltransferase family. As to quaternary structure, component of the RNA degradosome, which is a multiprotein complex involved in RNA processing and mRNA degradation. Requires Mg(2+) as cofactor.

It localises to the cytoplasm. It catalyses the reaction RNA(n+1) + phosphate = RNA(n) + a ribonucleoside 5'-diphosphate. Its function is as follows. Involved in mRNA degradation. Catalyzes the phosphorolysis of single-stranded polyribonucleotides processively in the 3'- to 5'-direction. The polypeptide is Polyribonucleotide nucleotidyltransferase (Shewanella frigidimarina (strain NCIMB 400)).